We begin with the raw amino-acid sequence, 274 residues long: DegV domain-containing protein Cgl2349/cg2579 (274 aa).

In terms of domain architecture, DegV spans 3-259; that stretch reads VRVIVDSSAC…PGAVSVSAVF (257 aa). 2 residues coordinate hexadecanoate: T39 and S73.

Monomer.

Binds long-chain fatty acids, such as palmitate, and may play a role in lipid transport or fatty acid metabolism. The protein is DegV domain-containing protein Cgl2349/cg2579 of Corynebacterium glutamicum (strain ATCC 13032 / DSM 20300 / JCM 1318 / BCRC 11384 / CCUG 27702 / LMG 3730 / NBRC 12168 / NCIMB 10025 / NRRL B-2784 / 534).